Here is a 23-residue protein sequence, read N- to C-terminus: Nephrotoxin PsTX-115 (23 aa).

The protein localises to the secreted. Its subcellular location is the nematocyst. In terms of biological role, nephrotoxin. When injected intravenously in rats, causes severe destructive glomerular changes. At 24 hours post-injection partial disruption of the glomerular basement membrane, massive thrombus formation in glomerular capillaries, severe mesangiolysis and infiltrating cells were observed in the majority of glomeruli. The chain is Nephrotoxin PsTX-115 from Phyllodiscus semoni (Night anemone).